Reading from the N-terminus, the 332-residue chain is Protein FAM131B (332 aa).

The tract at residues 1 to 22 (MDSTSSLHGSSLHRPSTEQTRT) is disordered. Phosphoserine is present on residues serine 47, serine 114, and serine 117. Residues 221–332 (LGPAFDDSQP…FDEEEGDANN (112 aa)) form a disordered region. Basic and acidic residues-rich tracts occupy residues 272–281 (PVEEEKRPLA) and 288–302 (AGCR…REDP). Phosphoserine occurs at positions 295, 297, and 313. At threonine 316 the chain carries Phosphothreonine. 3 positions are modified to phosphoserine: serine 317, serine 318, and serine 322. Positions 323–332 (FDEEEGDANN) are enriched in acidic residues.

It belongs to the FAM131 family.

This chain is Protein FAM131B (Fam131b), found in Rattus norvegicus (Rat).